Here is a 175-residue protein sequence, read N- to C-terminus: MRYLPIFVFLGSFGYTETTLTKELIKDAAEKCCTRNRQECCIEIMKFGTPIRCGYDRDPKLPGYVYKCLQNVLFAKEPKKKINLDDSVCCSVFGNDQNDSGRRCENRCKNLMTSPSIDAATRLDSIKSCSLLDNVLYKCFEKCRSLRKDGIKIEVLQFEEYCNATFIQKRTFRGV.

Residues 1–18 form the signal peptide; it reads MRYLPIFVFLGSFGYTET. N-linked (GlcNAc...) asparagine glycans are attached at residues asparagine 98 and asparagine 163.

The protein localises to the secreted. Functionally, dictates male development. Probably plays a direct role in cell signaling during C.elegans sex determination. Inhibits the function of tra-2a. The polypeptide is Protein her-1 (her-1) (Caenorhabditis elegans).